A 220-amino-acid polypeptide reads, in one-letter code: Orotate phosphoribosyltransferase (220 aa).

Position 26 (K26) interacts with 5-phospho-alpha-D-ribose 1-diphosphate. 34–35 (FF) serves as a coordination point for orotate. 5-phospho-alpha-D-ribose 1-diphosphate is bound by residues 72–73 (YK), R99, K100, K103, H105, and 125–133 (DDVISAGTS). Orotate is bound by residues S129 and R157.

The protein belongs to the purine/pyrimidine phosphoribosyltransferase family. PyrE subfamily. As to quaternary structure, homodimer. It depends on Mg(2+) as a cofactor.

The catalysed reaction is orotidine 5'-phosphate + diphosphate = orotate + 5-phospho-alpha-D-ribose 1-diphosphate. It participates in pyrimidine metabolism; UMP biosynthesis via de novo pathway; UMP from orotate: step 1/2. Its function is as follows. Catalyzes the transfer of a ribosyl phosphate group from 5-phosphoribose 1-diphosphate to orotate, leading to the formation of orotidine monophosphate (OMP). The sequence is that of Orotate phosphoribosyltransferase from Nitrosococcus oceani (strain ATCC 19707 / BCRC 17464 / JCM 30415 / NCIMB 11848 / C-107).